Consider the following 390-residue polypeptide: Phosphopentomutase (390 aa).

The Mn(2+) site is built by Asp-10, Asp-282, His-287, Asp-323, His-324, and His-335.

It belongs to the phosphopentomutase family. It depends on Mn(2+) as a cofactor.

It localises to the cytoplasm. The enzyme catalyses 2-deoxy-alpha-D-ribose 1-phosphate = 2-deoxy-D-ribose 5-phosphate. The catalysed reaction is alpha-D-ribose 1-phosphate = D-ribose 5-phosphate. The protein operates within carbohydrate degradation; 2-deoxy-D-ribose 1-phosphate degradation; D-glyceraldehyde 3-phosphate and acetaldehyde from 2-deoxy-alpha-D-ribose 1-phosphate: step 1/2. Isomerase that catalyzes the conversion of deoxy-ribose 1-phosphate (dRib-1-P) and ribose 1-phosphate (Rib-1-P) to deoxy-ribose 5-phosphate (dRib-5-P) and ribose 5-phosphate (Rib-5-P), respectively. The polypeptide is Phosphopentomutase (Lachnoclostridium phytofermentans (strain ATCC 700394 / DSM 18823 / ISDg) (Clostridium phytofermentans)).